The primary structure comprises 396 residues: ATP-dependent RNA helicase eIF4A (396 aa).

Positions 22-50 (YSFDDLNLKPNIVRGIFGYGYESPSAIQQ) match the Q motif motif. A Helicase ATP-binding domain is found at 53–223 (ILPITEGRDV…TKFMNNPVRI (171 aa)). 66–73 (AQSGTGKT) contacts ATP. The DEAD box signature appears at 171–174 (DEAD). The region spanning 234–395 (GIKQFYINVE…EMPANIGELF (162 aa)) is the Helicase C-terminal domain.

Belongs to the DEAD box helicase family. eIF4A subfamily. Component of the eIF4F complex, which composition varies with external and internal environmental conditions. It is composed of at least eIF4A, eIF4E and eIF4G.

It localises to the cytoplasm. It carries out the reaction ATP + H2O = ADP + phosphate + H(+). ATP-dependent RNA helicase which is a subunit of the eIF4F complex involved in cap recognition and is required for mRNA binding to ribosome. In the current model of translation initiation, eIF4A unwinds RNA secondary structures in the 5'-UTR of mRNAs which is necessary to allow efficient binding of the small ribosomal subunit, and subsequent scanning for the initiator codon. The protein is ATP-dependent RNA helicase eIF4A (TIF1) of Meyerozyma guilliermondii (strain ATCC 6260 / CBS 566 / DSM 6381 / JCM 1539 / NBRC 10279 / NRRL Y-324) (Yeast).